Here is a 406-residue protein sequence, read N- to C-terminus: NIPA-like protein 3 (406 aa).

4 helical membrane-spanning segments follow: residues 33 to 53 (NLIG…ALNL), 76 to 96 (WWLG…SYAF), 101 to 121 (LIVP…IIFI), and 135 to 155 (VLSF…VTFA). Asparagine 166 carries N-linked (GlcNAc...) asparagine glycosylation. The next 5 helical transmembrane spans lie at 171–191 (LVSW…CLLL), 202–222 (IVVI…TVKA), 240–260 (PIFY…AAFL), 271–291 (LIAS…GAIF), and 300–320 (VLHI…VFLI). Phosphoserine is present on serine 372.

This sequence belongs to the NIPA family.

The protein localises to the membrane. This chain is NIPA-like protein 3 (NIPAL3), found in Homo sapiens (Human).